The primary structure comprises 366 residues: GTPase Obg (366 aa).

Positions 1 to 162 (MRFVDEATIN…RRLRLELKIL (162 aa)) constitute an Obg domain. One can recognise an OBG-type G domain in the interval 163–335 (ADAGLLGLPN…VVDAMWRLRD (173 aa)). Residues 169–176 (GLPNAGKS), 194–198 (FTTLT), 218–221 (DIPG), 288–291 (NKID), and 316–318 (SAM) each bind GTP. Mg(2+) contacts are provided by serine 176 and threonine 196.

This sequence belongs to the TRAFAC class OBG-HflX-like GTPase superfamily. OBG GTPase family. Monomer. Mg(2+) serves as cofactor.

It is found in the cytoplasm. In terms of biological role, an essential GTPase which binds GTP, GDP and possibly (p)ppGpp with moderate affinity, with high nucleotide exchange rates and a fairly low GTP hydrolysis rate. Plays a role in control of the cell cycle, stress response, ribosome biogenesis and in those bacteria that undergo differentiation, in morphogenesis control. This Nitratidesulfovibrio vulgaris (strain ATCC 29579 / DSM 644 / CCUG 34227 / NCIMB 8303 / VKM B-1760 / Hildenborough) (Desulfovibrio vulgaris) protein is GTPase Obg.